A 782-amino-acid chain; its full sequence is Protein NEDD1 (782 aa).

8 WD repeats span residues 1 to 34, 41 to 80, 90 to 130, 133 to 172, 176 to 216, 220 to 260, 262 to 301, and 307 to 358; these read MMSN…GDPC, SPGC…LGTV, SAEE…CIKK, GHTS…RATE, PNGQ…PKMS, QHSA…SSSC, AYEA…QPVT, and SNSE…TPSA. Disordered regions lie at residues 350-393 and 467-512; these read PLPS…WPSG and PIFD…EAWG. Polar residues-rich tracts occupy residues 352 to 362, 370 to 386, and 488 to 498; these read PSTTPSASQSA, VSAS…TPNR, and SFGSITPTASS. Residues 753–782 are a coiled coil; the sequence is VLSSILENQAEQMKELKLLRKENQELRQRL.

As to expression, expressed in root meristematic cells.

It localises to the nucleus envelope. The protein resides in the chromosome. It is found in the centromere. The protein localises to the kinetochore. Its subcellular location is the cytoplasm. It localises to the cytoskeleton. The protein resides in the phragmoplast. It is found in the microtubule organizing center. In terms of biological role, regulates microtubules organization in a centrosome-independent manner. Required for the spindle to be positioned correctly and for the function of gamma-tubulin in organizing phragmoplast microtubules. Component of active gamma-tubulin ring complexes (gamma-TuRCs) associated with cortical microtubules in interphase cells. Mediates gamma-TuRC recruitment to the nucleation sites and is important for determining the ratio of branched to parallel nucleation. May mediate the localization of GCP2 and GCP3 to the nuclear envelope. The sequence is that of Protein NEDD1 from Arabidopsis thaliana (Mouse-ear cress).